We begin with the raw amino-acid sequence, 152 residues long: Protein PLANT CADMIUM RESISTANCE 2 (152 aa).

A helical membrane pass occupies residues 57–79; that stretch reads TAGALYALIAVVTGCACIYSCFY.

It belongs to the cornifelin family. As to quaternary structure, homooligomer. In terms of tissue distribution, expressed in roots, leaves, shoots, stems, flowers and siliques. In leaves, restricted mainly to the vascular tissue. Expressed in all cells in the root tip, in the vascular tissue and the epidermis in the elongation zone, and only in the epidermal cells in the root hair zone.

Its subcellular location is the cell membrane. Zinc transporter acting in both zinc extrusion and long-distance zinc transport. Involved in the loading of zinc into the xyleme and in the detoxification of excess zinc at the epidermal cells. Acts independently from the zinc transporters HMA2 and HMA4. May be also involved in cadmium resistance. The protein is Protein PLANT CADMIUM RESISTANCE 2 (PCR2) of Arabidopsis thaliana (Mouse-ear cress).